Here is a 116-residue protein sequence, read N- to C-terminus: Putative oxygen-evolving enhancer protein 1 (116 aa).

This sequence belongs to the PsbO family.

It is found in the plastid. The protein resides in the chloroplast thylakoid membrane. Functionally, stabilizes the manganese cluster which is the primary site of water splitting. This chain is Putative oxygen-evolving enhancer protein 1, found in Pinus strobus (Eastern white pine).